Consider the following 298-residue polypeptide: Phosphatidylserine decarboxylase proenzyme (298 aa).

Residues Asp-113, His-169, and Ser-256 each act as charge relay system; for autoendoproteolytic cleavage activity in the active site. Residue Ser-256 is the Schiff-base intermediate with substrate; via pyruvic acid; for decarboxylase activity of the active site. Position 256 is a pyruvic acid (Ser); by autocatalysis (Ser-256).

The protein belongs to the phosphatidylserine decarboxylase family. PSD-B subfamily. Prokaryotic type II sub-subfamily. As to quaternary structure, heterodimer of a large membrane-associated beta subunit and a small pyruvoyl-containing alpha subunit. It depends on pyruvate as a cofactor. Post-translationally, is synthesized initially as an inactive proenzyme. Formation of the active enzyme involves a self-maturation process in which the active site pyruvoyl group is generated from an internal serine residue via an autocatalytic post-translational modification. Two non-identical subunits are generated from the proenzyme in this reaction, and the pyruvate is formed at the N-terminus of the alpha chain, which is derived from the carboxyl end of the proenzyme. The autoendoproteolytic cleavage occurs by a canonical serine protease mechanism, in which the side chain hydroxyl group of the serine supplies its oxygen atom to form the C-terminus of the beta chain, while the remainder of the serine residue undergoes an oxidative deamination to produce ammonia and the pyruvoyl prosthetic group on the alpha chain. During this reaction, the Ser that is part of the protease active site of the proenzyme becomes the pyruvoyl prosthetic group, which constitutes an essential element of the active site of the mature decarboxylase.

It localises to the cell membrane. The catalysed reaction is a 1,2-diacyl-sn-glycero-3-phospho-L-serine + H(+) = a 1,2-diacyl-sn-glycero-3-phosphoethanolamine + CO2. The protein operates within phospholipid metabolism; phosphatidylethanolamine biosynthesis; phosphatidylethanolamine from CDP-diacylglycerol: step 2/2. In terms of biological role, catalyzes the formation of phosphatidylethanolamine (PtdEtn) from phosphatidylserine (PtdSer). In Desulfitobacterium hafniense (strain DSM 10664 / DCB-2), this protein is Phosphatidylserine decarboxylase proenzyme.